The sequence spans 570 residues: Sulfite reductase [NADPH] hemoprotein beta-component (570 aa).

[4Fe-4S] cluster contacts are provided by C434, C440, C479, and C483. C483 is a binding site for siroheme.

This sequence belongs to the nitrite and sulfite reductase 4Fe-4S domain family. In terms of assembly, alpha(8)-beta(8). The alpha component is a flavoprotein, the beta component is a hemoprotein. Siroheme serves as cofactor. Requires [4Fe-4S] cluster as cofactor.

It carries out the reaction hydrogen sulfide + 3 NADP(+) + 3 H2O = sulfite + 3 NADPH + 4 H(+). The protein operates within sulfur metabolism; hydrogen sulfide biosynthesis; hydrogen sulfide from sulfite (NADPH route): step 1/1. In terms of biological role, component of the sulfite reductase complex that catalyzes the 6-electron reduction of sulfite to sulfide. This is one of several activities required for the biosynthesis of L-cysteine from sulfate. The sequence is that of Sulfite reductase [NADPH] hemoprotein beta-component from Escherichia coli O1:K1 / APEC.